The following is a 1744-amino-acid chain: Probable disease resistance protein At4g19520 (1744 aa).

A TIR 1 domain is found at 3–163 (DGKEVYISFN…KIVADVRQKL (161 aa)). Residue Glu-80 is part of the active site. Residues 192–411 (SLGIWGMAGI…VSEKEIFLDI (220 aa)) enclose the NB-ARC domain. 20 LRR repeats span residues 503–526 (YEDV…AFQH), 557–581 (PPEL…GFQY), 583–602 (VELN…TKNL), 603–626 (EVLK…QYSP), 648–669 (LQHL…PKVP), 670–692 (PSIR…NHSS), 710–733 (DHRK…IVIF), 734–754 (ESLE…QGFP), 755–777 (QNLK…LCHH), 779–802 (SKLV…MSNM), 804–823 (YLAV…KELP), 824–846 (RNLK…LLET), 848–871 (SEVV…MSKL), 892–915 (PLNL…IGDL), 917–939 (LLDT…MHNL), 941–963 (PLKV…LPKV), 987–1010 (YEHR…IRWM), 1011–1035 (PSLK…DFSK), 1037–1059 (LSLR…SLQL), and 1062–1086 (AHGC…TFSN). The 161-residue stretch at 1399–1559 (RNNDVFVSFH…KVANDIRKKL (161 aa)) folds into the TIR 2 domain.

Belongs to the disease resistance TIR-NB-LRR family.

It catalyses the reaction NAD(+) + H2O = ADP-D-ribose + nicotinamide + H(+). Functionally, probable disease resistance protein. The protein is Probable disease resistance protein At4g19520 of Arabidopsis thaliana (Mouse-ear cress).